Reading from the N-terminus, the 447-residue chain is ATP-dependent protease ATPase subunit HslU (447 aa).

ATP-binding positions include I18, 60-65 (GVGKTE), D259, E325, and R397.

This sequence belongs to the ClpX chaperone family. HslU subfamily. A double ring-shaped homohexamer of HslV is capped on each side by a ring-shaped HslU homohexamer. The assembly of the HslU/HslV complex is dependent on binding of ATP.

It is found in the cytoplasm. Its function is as follows. ATPase subunit of a proteasome-like degradation complex; this subunit has chaperone activity. The binding of ATP and its subsequent hydrolysis by HslU are essential for unfolding of protein substrates subsequently hydrolyzed by HslV. HslU recognizes the N-terminal part of its protein substrates and unfolds these before they are guided to HslV for hydrolysis. This Burkholderia ambifaria (strain ATCC BAA-244 / DSM 16087 / CCUG 44356 / LMG 19182 / AMMD) (Burkholderia cepacia (strain AMMD)) protein is ATP-dependent protease ATPase subunit HslU.